Here is a 122-residue protein sequence, read N- to C-terminus: Small ribosomal subunit protein uS13 (122 aa).

The segment at 94 to 122 (RGLPVRGQRTKTNARQRKGPRPAIGGRKK) is disordered.

The protein belongs to the universal ribosomal protein uS13 family. As to quaternary structure, part of the 30S ribosomal subunit. Forms a loose heterodimer with protein S19. Forms two bridges to the 50S subunit in the 70S ribosome.

Functionally, located at the top of the head of the 30S subunit, it contacts several helices of the 16S rRNA. In the 70S ribosome it contacts the 23S rRNA (bridge B1a) and protein L5 of the 50S subunit (bridge B1b), connecting the 2 subunits; these bridges are implicated in subunit movement. Contacts the tRNAs in the A and P-sites. This Rubrobacter xylanophilus (strain DSM 9941 / JCM 11954 / NBRC 16129 / PRD-1) protein is Small ribosomal subunit protein uS13.